Consider the following 252-residue polypeptide: Phosphoribosyl-ATP pyrophosphatase (252 aa).

Belongs to the PRA-PH family.

It localises to the cytoplasm. It catalyses the reaction 1-(5-phospho-beta-D-ribosyl)-ATP + H2O = 1-(5-phospho-beta-D-ribosyl)-5'-AMP + diphosphate + H(+). The protein operates within amino-acid biosynthesis; L-histidine biosynthesis; L-histidine from 5-phospho-alpha-D-ribose 1-diphosphate: step 2/9. In Magnetococcus marinus (strain ATCC BAA-1437 / JCM 17883 / MC-1), this protein is Phosphoribosyl-ATP pyrophosphatase.